A 294-amino-acid chain; its full sequence is 4-hydroxy-tetrahydrodipicolinate synthase (294 aa).

Pyruvate is bound at residue Thr-47. The active-site Proton donor/acceptor is the Tyr-135. The active-site Schiff-base intermediate with substrate is the Lys-163. Residue Ile-206 coordinates pyruvate.

Belongs to the DapA family. As to quaternary structure, homodimer.

It is found in the cytoplasm. The enzyme catalyses L-aspartate 4-semialdehyde + pyruvate = (2S,4S)-4-hydroxy-2,3,4,5-tetrahydrodipicolinate + H2O + H(+). It functions in the pathway amino-acid biosynthesis; L-lysine biosynthesis via DAP pathway; (S)-tetrahydrodipicolinate from L-aspartate: step 3/4. Functionally, catalyzes the condensation of (S)-aspartate-beta-semialdehyde [(S)-ASA] and pyruvate to 4-hydroxy-tetrahydrodipicolinate (HTPA). The polypeptide is 4-hydroxy-tetrahydrodipicolinate synthase (Staphylococcus haemolyticus (strain JCSC1435)).